We begin with the raw amino-acid sequence, 127 residues long: Cyclin-dependent kinase 2-associated protein 2 (127 aa).

The interval 1-49 (MSYKPIAPAPSSTPGSSTPGPGTPVPTAGSVPSPSGSVPGAAGPFRPLF) is disordered. The segment covering 9–44 (APSSTPGSSTPGPGTPVPTAGSVPSPSGSVPGAAGP) has biased composition (low complexity). The tract at residues 65 to 107 (PPGAQGSQSTYTDLLSVIEEMGKEIRPTYAGSKSAMERLKRGI) is interaction with CDK2.

It belongs to the CDK2AP family. In terms of assembly, component of the nucleosome remodeling and deacetylase (NuRD) repressor complex, composed of core proteins MTA1, MTA2, MTA3, RBBP4, RBBP7, HDAC1, HDAC2, MBD2, MBD3, and peripherally associated proteins CDK2AP1, CDK2AP2, GATAD2A, GATAD2B, CHD3, CHD4 and CHD5. The exact stoichiometry of the NuRD complex is unknown, and some subunits such as MBD2 and MBD3, GATAD2A and GATAD2B, and CHD3, CHD4 and CHD5 define mutually exclusive NuRD complexes. Interacts with CDK2AP1. Interacts with CDK2. Interacts with MAPK1. In terms of processing, phosphorylated by MAPK1 and CDK2.

It localises to the cytoplasm. It is found in the nucleus. Functionally, acts as a component of the histone deacetylase NuRD complex which participates in the remodeling of chromatin. Inhibits cell cycle G1/S phase transition by repressing CDK2 expression and activation; represses CDK2 activation by inhibiting its interaction with cyclin E and A. Plays a role in regulating the self-renewal of embryonic stem cells (ESCs) and in maintaining cell survival during terminal differentiation of ESCs. Regulates microtubule organization of metaphase II oocytes. The protein is Cyclin-dependent kinase 2-associated protein 2 (CDK2AP2) of Bos taurus (Bovine).